A 158-amino-acid chain; its full sequence is Protein NrdI (158 aa).

It belongs to the NrdI family.

Its function is as follows. Probably involved in ribonucleotide reductase function. This is Protein NrdI from Rhodococcus jostii (strain RHA1).